We begin with the raw amino-acid sequence, 75 residues long: U6-lycotoxin-Ls1g (75 aa).

The signal sequence occupies residues 1 to 21 (MKLLLFTALVLVVISLIEVEA). The propeptide occupies 22-25 (ENER).

It belongs to the neurotoxin 19 (CSTX) family. 06 (U6-Lctx) subfamily. In terms of processing, contains 4 disulfide bonds. Expressed by the venom gland.

The protein resides in the secreted. This Lycosa singoriensis (Wolf spider) protein is U6-lycotoxin-Ls1g.